The chain runs to 174 residues: Protein PopB (174 aa).

The interval 1–174 is disordered; that stretch reads MSHSKIKAGG…EAMKIKDDDD (174 aa). The segment covering 50–65 has biased composition (polar residues); the sequence is LNKSNLGSDSQTWTPG. Residues 66–78 show a composition bias toward low complexity; it reads STMVSLKSRSSSS. A compositionally biased stretch (basic and acidic residues) spans 79–89; the sequence is HKPDTGGDTKP. The segment covering 147 to 161 has biased composition (low complexity); sequence IALQRAIQRQTQTRQ. Basic and acidic residues predominate over residues 162–174; it reads KMQEAMKIKDDDD.

The protein localises to the secreted. In terms of biological role, probably involved in host-pathogen interactions. This Ralstonia nicotianae (strain ATCC BAA-1114 / GMI1000) (Ralstonia solanacearum) protein is Protein PopB (popB).